The chain runs to 365 residues: Phospho-N-acetylmuramoyl-pentapeptide-transferase (365 aa).

Transmembrane regions (helical) follow at residues 29–49 (VGGL…IIVW), 73–93 (GTPT…VIIW), 97–117 (SNIY…LGLV), 133–153 (ILNK…IMFI), 171–191 (IVCK…VGTS), 202–222 (GLVI…TWVV), 242–262 (LVVV…FNSY), 266–286 (IFMG…VSIL), 291–311 (YLLL…IFQV), and 341–361 (IVVR…VIFI).

Belongs to the glycosyltransferase 4 family. MraY subfamily. Requires Mg(2+) as cofactor.

It localises to the cell inner membrane. It catalyses the reaction UDP-N-acetyl-alpha-D-muramoyl-L-alanyl-gamma-D-glutamyl-meso-2,6-diaminopimeloyl-D-alanyl-D-alanine + di-trans,octa-cis-undecaprenyl phosphate = di-trans,octa-cis-undecaprenyl diphospho-N-acetyl-alpha-D-muramoyl-L-alanyl-D-glutamyl-meso-2,6-diaminopimeloyl-D-alanyl-D-alanine + UMP. The protein operates within cell wall biogenesis; peptidoglycan biosynthesis. In terms of biological role, catalyzes the initial step of the lipid cycle reactions in the biosynthesis of the cell wall peptidoglycan: transfers peptidoglycan precursor phospho-MurNAc-pentapeptide from UDP-MurNAc-pentapeptide onto the lipid carrier undecaprenyl phosphate, yielding undecaprenyl-pyrophosphoryl-MurNAc-pentapeptide, known as lipid I. The sequence is that of Phospho-N-acetylmuramoyl-pentapeptide-transferase from Blochmanniella floridana.